Consider the following 122-residue polypeptide: Large ribosomal subunit protein uL14 (122 aa).

Belongs to the universal ribosomal protein uL14 family. Part of the 50S ribosomal subunit. Forms a cluster with proteins L3 and L19. In the 70S ribosome, L14 and L19 interact and together make contacts with the 16S rRNA in bridges B5 and B8.

Functionally, binds to 23S rRNA. Forms part of two intersubunit bridges in the 70S ribosome. The chain is Large ribosomal subunit protein uL14 from Bifidobacterium longum (strain DJO10A).